A 260-amino-acid chain; its full sequence is 5'-nucleotidase SurE (260 aa).

Positions 13, 14, 44, and 102 each coordinate a divalent metal cation.

Belongs to the SurE nucleotidase family. A divalent metal cation is required as a cofactor.

It localises to the cytoplasm. The enzyme catalyses a ribonucleoside 5'-phosphate + H2O = a ribonucleoside + phosphate. In terms of biological role, nucleotidase that shows phosphatase activity on nucleoside 5'-monophosphates. This Christiangramia forsetii (strain DSM 17595 / CGMCC 1.15422 / KT0803) (Gramella forsetii) protein is 5'-nucleotidase SurE.